The primary structure comprises 168 residues: MVSLAEGFGFNTNILETNVLNLAVVLPIVFTLGRDTLTSMLDTRREKILGSLRSADDRFKQAQLELDTAKAELATANDKVKDIKSEGRKTLEALTAEQSSRMAEVATRFAGLKDETIRLEEEKAIAQFRKQLVNVAFEKAIVGIQSQMNASLHRKYIDAKISLMTSRL.

The chain crosses the membrane as a helical span at residues 20–37; sequence LNLAVVLPIVFTLGRDTL.

Belongs to the ATPase B chain family. As to quaternary structure, F-type ATPases have 2 components, F(1) - the catalytic core - and F(0) - the membrane proton channel. F(1) has five subunits: alpha(3), beta(3), gamma(1), delta(1), epsilon(1). F(0) has four main subunits: a(1), b(1), b'(1) and c(10-14). The alpha and beta chains form an alternating ring which encloses part of the gamma chain. F(1) is attached to F(0) by a central stalk formed by the gamma and epsilon chains, while a peripheral stalk is formed by the delta, b and b' chains.

The protein localises to the plastid. Its subcellular location is the chloroplast thylakoid membrane. Functionally, f(1)F(0) ATP synthase produces ATP from ADP in the presence of a proton or sodium gradient. F-type ATPases consist of two structural domains, F(1) containing the extramembraneous catalytic core and F(0) containing the membrane proton channel, linked together by a central stalk and a peripheral stalk. During catalysis, ATP synthesis in the catalytic domain of F(1) is coupled via a rotary mechanism of the central stalk subunits to proton translocation. In terms of biological role, component of the F(0) channel, it forms part of the peripheral stalk, linking F(1) to F(0). The sequence is that of ATP synthase subunit b, chloroplastic from Ostreococcus tauri.